The primary structure comprises 353 residues: Photosystem II protein D1 (353 aa).

T2 is subject to N-acetylthreonine. T2 carries the phosphothreonine modification. Transmembrane regions (helical) follow at residues 29 to 46 (YIGW…TATS), 118 to 133 (HFLL…EWEL), and 142 to 156 (WIAV…AATA). Residue H118 coordinates chlorophyll a. Pheophytin a is bound at residue Y126. [CaMn4O5] cluster contacts are provided by D170 and E189. Residues 197–218 (FHMLGVAGVFGGSLFSAMHGSL) traverse the membrane as a helical segment. Residue H198 participates in chlorophyll a binding. A quinone is bound by residues H215 and 264–265 (SF). H215 serves as a coordination point for Fe cation. H272 is a binding site for Fe cation. Residues 274–288 (FLAAWPVVGIWFTAL) form a helical membrane-spanning segment. [CaMn4O5] cluster contacts are provided by H332, E333, D342, and A344. The propeptide occupies 345–353 (AIEAPSTNG).

Belongs to the reaction center PufL/M/PsbA/D family. As to quaternary structure, PSII is composed of 1 copy each of membrane proteins PsbA, PsbB, PsbC, PsbD, PsbE, PsbF, PsbH, PsbI, PsbJ, PsbK, PsbL, PsbM, PsbT, PsbX, PsbY, PsbZ, Psb30/Ycf12, at least 3 peripheral proteins of the oxygen-evolving complex and a large number of cofactors. It forms dimeric complexes. The D1/D2 heterodimer binds P680, chlorophylls that are the primary electron donor of PSII, and subsequent electron acceptors. It shares a non-heme iron and each subunit binds pheophytin, quinone, additional chlorophylls, carotenoids and lipids. D1 provides most of the ligands for the Mn4-Ca-O5 cluster of the oxygen-evolving complex (OEC). There is also a Cl(-1) ion associated with D1 and D2, which is required for oxygen evolution. The PSII complex binds additional chlorophylls, carotenoids and specific lipids. serves as cofactor. Tyr-161 forms a radical intermediate that is referred to as redox-active TyrZ, YZ or Y-Z. Post-translationally, C-terminally processed by CTPA; processing is essential to allow assembly of the oxygen-evolving complex and thus photosynthetic growth.

The protein localises to the plastid. It is found in the chloroplast thylakoid membrane. It catalyses the reaction 2 a plastoquinone + 4 hnu + 2 H2O = 2 a plastoquinol + O2. Its function is as follows. Photosystem II (PSII) is a light-driven water:plastoquinone oxidoreductase that uses light energy to abstract electrons from H(2)O, generating O(2) and a proton gradient subsequently used for ATP formation. It consists of a core antenna complex that captures photons, and an electron transfer chain that converts photonic excitation into a charge separation. The D1/D2 (PsbA/PsbD) reaction center heterodimer binds P680, the primary electron donor of PSII as well as several subsequent electron acceptors. The protein is Photosystem II protein D1 of Nicotiana debneyi (Debney's tobacco).